The chain runs to 230 residues: UPF0758 protein ABC2615 (230 aa).

The region spanning 104-226 (VISSPEDAAE…FISLKERGFF (123 aa)) is the MPN domain. Zn(2+) is bound by residues His-175, His-177, and Asp-188. The JAMM motif signature appears at 175–188 (HNHPSGDPSPSPED).

Belongs to the UPF0758 family.

This chain is UPF0758 protein ABC2615, found in Shouchella clausii (strain KSM-K16) (Alkalihalobacillus clausii).